Consider the following 298-residue polypeptide: Lipoyl synthase (298 aa).

Residues C40, C45, C51, C67, C71, C74, and S280 each coordinate [4Fe-4S] cluster. One can recognise a Radical SAM core domain in the interval 53-269 (AVRKTATFMI…KEIALSKGFS (217 aa)).

It belongs to the radical SAM superfamily. Lipoyl synthase family. The cofactor is [4Fe-4S] cluster.

The protein resides in the cytoplasm. The catalysed reaction is [[Fe-S] cluster scaffold protein carrying a second [4Fe-4S](2+) cluster] + N(6)-octanoyl-L-lysyl-[protein] + 2 oxidized [2Fe-2S]-[ferredoxin] + 2 S-adenosyl-L-methionine + 4 H(+) = [[Fe-S] cluster scaffold protein] + N(6)-[(R)-dihydrolipoyl]-L-lysyl-[protein] + 4 Fe(3+) + 2 hydrogen sulfide + 2 5'-deoxyadenosine + 2 L-methionine + 2 reduced [2Fe-2S]-[ferredoxin]. Its pathway is protein modification; protein lipoylation via endogenous pathway; protein N(6)-(lipoyl)lysine from octanoyl-[acyl-carrier-protein]. Its function is as follows. Catalyzes the radical-mediated insertion of two sulfur atoms into the C-6 and C-8 positions of the octanoyl moiety bound to the lipoyl domains of lipoate-dependent enzymes, thereby converting the octanoylated domains into lipoylated derivatives. The polypeptide is Lipoyl synthase (Bacillus anthracis (strain A0248)).